A 1130-amino-acid polypeptide reads, in one-letter code: Roquin-1 (1130 aa).

Positions 14, 17, 33, 35, 38, 50, and 53 each coordinate Zn(2+). An RING-type; degenerate zinc finger spans residues 14-54; that stretch reads CPICTQTFDETIRKPISLGCGHTVCKMCLNKLHRKACPFDQ. An HEPN-N region spans residues 128–176; it reads VLSRPMQRKLVTLVHCQLVEEEGRIRAMRAARSLGERTVTELILQHQNP. An ROQ region spans residues 177-326; it reads QQLSSNLWAA…MQSIIDKLQT (150 aa). An HEPN-C region spans residues 327 to 399; the sequence is PASFAQSVQE…GLVDYIQNHS (73 aa). The C3H1-type zinc-finger motif lies at 413–441; the sequence is KYKTYMCRDMKQRGGCPRGASCTFAHSQE. Ser462 bears the Phosphoserine mark. Disordered stretches follow at residues 493 to 567 and 722 to 750; these read LPNG…DLPP and PHPAQIRPSYPRDPPYSRLPPPQPHPSLD. Residues 497-506 show a composition bias toward polar residues; that stretch reads IASSGSTVTQ. Ser531 and Ser535 each carry phosphoserine. Composition is skewed to pro residues over residues 553-567 and 732-746; these read NPHPVPPRGPTDLPP and PRDPPYSRLPPPQPH. A phosphoserine mark is found at Ser861, Ser1107, and Ser1110. The tract at residues 1100–1130 is disordered; that stretch reads KTSSLNLSEDSEGGGDNNDSQRSGVVSNSAP. The segment covering 1116 to 1130 has biased composition (polar residues); that stretch reads NNDSQRSGVVSNSAP.

As to quaternary structure, interacts with DDX6 and EDC4. Interacts with CCR4-NOT deadenylase complex. Interacts with RC3H1; the interaction is RNA independent. Proteolytically cleaved after Arg-510 and Arg-579 by MALT1 in activated CD4(+) T cells; cleavage at Arg-510 and Arg-579 is critical for promoting RC3H1 degradation in response to T-cell receptor (TCR) stimulation, and hence is necessary for prolonging the stability of a set of mRNAs controlling Th17 cell differentiation. In terms of tissue distribution, widely expressed, with highest levels in lymph node and thymus and slightly lesser amounts in brain, lung, and spleen (at protein level). Very weak expression in heart, muscle, and kidney (at protein level). Expressed in CD4(+) helper T-cells (at protein level).

It is found in the cytoplasm. The protein localises to the P-body. Its subcellular location is the cytoplasmic granule. It catalyses the reaction S-ubiquitinyl-[E2 ubiquitin-conjugating enzyme]-L-cysteine + [acceptor protein]-L-lysine = [E2 ubiquitin-conjugating enzyme]-L-cysteine + N(6)-ubiquitinyl-[acceptor protein]-L-lysine.. Its pathway is protein modification; protein ubiquitination. Functionally, post-transcriptional repressor of mRNAs containing a conserved stem loop motif, called constitutive decay element (CDE), which is often located in the 3'-UTR, as in HMGXB3, ICOS, IER3, NFKBID, NFKBIZ, PPP1R10, TNF, TNFRSF4 and in many more mRNAs. Cleaves translationally inactive mRNAs harboring a stem-loop (SL), often located in their 3'-UTRs, during the early phase of inflammation in a helicase UPF1-independent manner. Binds to CDE and promotes mRNA deadenylation and degradation. This process does not involve miRNAs. In follicular helper T (Tfh) cells, represses of ICOS and TNFRSF4/Ox40 expression, thus preventing spontaneous Tfh cell differentiation, germinal center B-cell differentiation in the absence of immunization and autoimmunity. In resting or LPS-stimulated macrophages, controls inflammation by suppressing TNF expression. Also recognizes CDE in its own mRNA and in that of paralogous RC3H2, possibly leading to feedback loop regulation. Inhibits cooperatively with ZC3H12A the differentiation of helper T cells Th17 in lungs. They repress target mRNA encoding the Th17 cell-promoting factors IL6, ICOS, REL, IRF4, NFKBID and NFKBIZ. The cooperation requires RNA-binding by RC3H1 and the nuclease activity of ZC3H12A. Recognizes and binds mRNAs containing a hexaloop stem-loop motif, called alternative decay element (ADE). Together with ZC3H12A, destabilizes TNFRSF4/OX40 mRNA by binding to the conserved stem loop structure in its 3'UTR. Able to interact with double-stranded RNA. miRNA-binding protein that regulates microRNA homeostasis. Enhances DICER-mediated processing of pre-MIR146a but reduces mature MIR146a levels through an increase of 3' end uridylation. Both inhibits ICOS mRNA expression and they may act together to exert the suppression. Acts as a ubiquitin E3 ligase. Pairs with E2 enzymes UBE2A, UBE2B, UBE2D2, UBE2F, UBE2G1, UBE2G2 and UBE2L3 and produces polyubiquitin chains. Shows the strongest activity when paired with UBE2N:UBE2V1 or UBE2N:UBE2V2 E2 complexes and generate both short and long polyubiquitin chains. This Mus musculus (Mouse) protein is Roquin-1.